A 234-amino-acid polypeptide reads, in one-letter code: HTH-type transcriptional regulator SmoD (234 aa).

The 69-residue stretch at 8–76 (LPMYMQIAEM…QGSGNYIRAV (69 aa)) folds into the HTH gntR-type domain. Residues 36–55 (ERDMAADLGIAVGTLRKSLA) constitute a DNA-binding region (H-T-H motif).

The protein localises to the cytoplasm. Probably regulates expression of genes involved in the sulfoquinovose monooxygenase (sulfo-SMO) pathway (smoABCDEFGHI). The sequence is that of HTH-type transcriptional regulator SmoD from Agrobacterium fabrum (strain C58 / ATCC 33970) (Agrobacterium tumefaciens (strain C58)).